A 604-amino-acid chain; its full sequence is MCGIVGYVGFRNATDVLLDGLRRLEYRGYDSAGIAVRTPEGLKVVKRSGKLSALAEAVGKTPLQGALGIGHTRWATHGAPTDPNAHPHTTEDGRIALIHNGIFENYLELKEALEARGHRFRSETDTEVLAHLLEETYRGDLLEALREALKAVRGAYAVVVAHEDHEEIVAARTVSPLVVGLGEGENFLASDVPALLPYTRRVLFLHDGDVVRLTREGVEITDLEGRPVQREAVEVDWTLEAAEKGGFPHYMLKEIYEQPWVLENTLGGRLREEEGTVELGLALDPREVDRVHVIACGTASYAGLYGKYLLETLARLPTEWDVASEYRYRDPVVDSRTLALAISQSGETIDTLEGLREAKRKGARSLGVINAKGSTLTREVEDVLYIHAGPEIGVASTKAYTAMLAAMALLAVWFGRGRGALALEEAQRLLREMRRLPRLVEEVLEKRPLVAHVAEKYHQARDFLFLGRHVQAPTAYEGALKLKEISYIHAEAYPAGEMKHGPIALIDEHLPVVVLATKGPLYEKTLSNIQEVRARGGKVIAIATEGDEEIPRLAQDVIYVPEVHPLLAPIVSVVPLQLLAYEIAVLLGRDVDQPRNLAKSVTVE.

The active-site Nucleophile; for GATase activity is Cys2. The Glutamine amidotransferase type-2 domain occupies 2-216 (CGIVGYVGFR…DGDVVRLTRE (215 aa)). SIS domains are found at residues 281–420 (LALD…GRGA) and 453–594 (VAEK…VDQP). The active-site For Fru-6P isomerization activity is Lys599.

In terms of assembly, homodimer.

It is found in the cytoplasm. The enzyme catalyses D-fructose 6-phosphate + L-glutamine = D-glucosamine 6-phosphate + L-glutamate. In terms of biological role, catalyzes the first step in hexosamine metabolism, converting fructose-6P into glucosamine-6P using glutamine as a nitrogen source. This chain is Glutamine--fructose-6-phosphate aminotransferase [isomerizing], found in Thermus thermophilus (strain ATCC 27634 / DSM 579 / HB8).